A 265-amino-acid polypeptide reads, in one-letter code: Protein synthesis inhibitor PD-S2 (265 aa).

2 disulfide bridges follow: Cys34/Cys262 and Cys88/Cys110. Residue Asn120 is glycosylated (N-linked (GlcNAc...) asparagine).

This sequence belongs to the ribosome-inactivating protein family. Type 1 RIP subfamily. Post-translationally, glycosylated. Seeds.

The catalysed reaction is Endohydrolysis of the N-glycosidic bond at one specific adenosine on the 28S rRNA.. Its function is as follows. Inhibits protein synthesis in animal cells. Useful as immunotoxin for pharmacological applications. The polypeptide is Protein synthesis inhibitor PD-S2 (Phytolacca dioica (Bella sombra tree)).